A 439-amino-acid chain; its full sequence is N5-carboxyaminoimidazole ribonucleotide synthase (439 aa).

Residues Lys113, Lys160, 197-200, Glu205, and 283-284 each bind ATP; these read EERV and NE. Residues 117–313 enclose the ATP-grasp domain; that stretch reads RRRLAALGAA…QFEQHLRAVL (197 aa).

The protein belongs to the PurK/PurT family. As to quaternary structure, homodimer.

It carries out the reaction 5-amino-1-(5-phospho-beta-D-ribosyl)imidazole + hydrogencarbonate + ATP = 5-carboxyamino-1-(5-phospho-D-ribosyl)imidazole + ADP + phosphate + 2 H(+). Its pathway is purine metabolism; IMP biosynthesis via de novo pathway; 5-amino-1-(5-phospho-D-ribosyl)imidazole-4-carboxylate from 5-amino-1-(5-phospho-D-ribosyl)imidazole (N5-CAIR route): step 1/2. Functionally, catalyzes the ATP-dependent conversion of 5-aminoimidazole ribonucleotide (AIR) and HCO(3)(-) to N5-carboxyaminoimidazole ribonucleotide (N5-CAIR). The sequence is that of N5-carboxyaminoimidazole ribonucleotide synthase from Mycobacterium leprae (strain TN).